Here is a 443-residue protein sequence, read N- to C-terminus: Elongation factor 1-alpha (443 aa).

The region spanning 5–228 (KTHINLVVIG…DTMQPPKRPY (224 aa)) is the tr-type G domain. The G1 stretch occupies residues 14–21 (GHVDSGKS). GTP is bound at residue 14–21 (GHVDSGKS). The interval 70–74 (GITID) is G2. The segment at 91-94 (DAPG) is G3. GTP contacts are provided by residues 91–95 (DAPGH) and 153–156 (NKMD). The segment at 153–156 (NKMD) is G4. Positions 192-194 (SGF) are G5.

This sequence belongs to the TRAFAC class translation factor GTPase superfamily. Classic translation factor GTPase family. EF-Tu/EF-1A subfamily.

It localises to the cytoplasm. Its function is as follows. This protein promotes the GTP-dependent binding of aminoacyl-tRNA to the A-site of ribosomes during protein biosynthesis. This chain is Elongation factor 1-alpha (MEF-1), found in Plasmodium falciparum (isolate K1 / Thailand).